The chain runs to 432 residues: MLNPNLLRNHIEFVFKNLARRGFSLDVKQFTEMEKKRKILQTKVEELQSRHNTLSKHIGRIKLIHPNIQCMKERIITLKKKIDVMKKELKILLEQIHIFLMNIPNLPDINIPDGMGSDDNQEVSRWGIIKNYNFKIKNHVELGNHLNGFDWKSAANISGSRFFIMKGKIALLYRVLGQFMLDLHTNEHGYLETYVPCLVKTNNLYGTGQLPRFKTDLFYAKSLLDESQNNNNFALIPTAEVPLTNLFRDCILDEQQLPIMLVAKTPCFRSEALSYGRDTQGLIRTHQFDKVEIVQIVHPSDSMQKLEELTIHAERVLKLLKLPYRKTLLCTRDIGFSSSKTYDLEVWFPSQNVYREVSSCSNMLDFQARRIKARFHCNAQNKKIFIHTINGSGLAVGRTLAAILENYQQKDGRIKIPKILRNNYMNGLEFLE.

238–240 (TAE) serves as a coordination point for L-serine. Residue 269–271 (RSE) participates in ATP binding. E292 is a binding site for L-serine. 356-359 (EVSS) lines the ATP pocket. S392 serves as a coordination point for L-serine.

Belongs to the class-II aminoacyl-tRNA synthetase family. Type-1 seryl-tRNA synthetase subfamily. Homodimer. The tRNA molecule binds across the dimer.

Its subcellular location is the cytoplasm. It carries out the reaction tRNA(Ser) + L-serine + ATP = L-seryl-tRNA(Ser) + AMP + diphosphate + H(+). The catalysed reaction is tRNA(Sec) + L-serine + ATP = L-seryl-tRNA(Sec) + AMP + diphosphate + H(+). It functions in the pathway aminoacyl-tRNA biosynthesis; selenocysteinyl-tRNA(Sec) biosynthesis; L-seryl-tRNA(Sec) from L-serine and tRNA(Sec): step 1/1. In terms of biological role, catalyzes the attachment of serine to tRNA(Ser). Is also able to aminoacylate tRNA(Sec) with serine, to form the misacylated tRNA L-seryl-tRNA(Sec), which will be further converted into selenocysteinyl-tRNA(Sec). This is Serine--tRNA ligase from Buchnera aphidicola subsp. Baizongia pistaciae (strain Bp).